The sequence spans 300 residues: PTB domain-containing engulfment adapter protein 1 (300 aa).

The region spanning 21–176 is the PID domain; it reads AKHFIPYNAK…GGLQKRIQDL (156 aa). The stretch at 160–199 forms a coiled coil; it reads VETRKQIGGLQKRIQDLETENVELKKQLQVLEEQLMIAQV.

It belongs to the ced-6 family.

It localises to the cytoplasm. In terms of biological role, may function as an adapter protein. Required for efficient phagocytosis of apoptotic cells. May play a role in the internalization and endosomal trafficking of various lrp1 ligands. The protein is PTB domain-containing engulfment adapter protein 1 (gulp1) of Danio rerio (Zebrafish).